Reading from the N-terminus, the 31-residue chain is Photosystem II reaction center protein T (31 aa).

Residues 3 to 23 (ALVYTFLLVGTLGIIFFAIFF) form a helical membrane-spanning segment.

It belongs to the PsbT family. In terms of assembly, PSII is composed of 1 copy each of membrane proteins PsbA, PsbB, PsbC, PsbD, PsbE, PsbF, PsbH, PsbI, PsbJ, PsbK, PsbL, PsbM, PsbT, PsbY, PsbZ, Psb30/Ycf12, at least 3 peripheral proteins of the oxygen-evolving complex and a large number of cofactors. It forms dimeric complexes.

It is found in the plastid. The protein resides in the chloroplast thylakoid membrane. Its function is as follows. Found at the monomer-monomer interface of the photosystem II (PS II) dimer, plays a role in assembly and dimerization of PSII. PSII is a light-driven water plastoquinone oxidoreductase, using light energy to abstract electrons from H(2)O, generating a proton gradient subsequently used for ATP formation. This chain is Photosystem II reaction center protein T, found in Mesostigma viride (Green alga).